We begin with the raw amino-acid sequence, 142 residues long: Ornithine decarboxylase antizyme (142 aa).

Residues methionine 1–methionine 19 show a composition bias toward low complexity. The tract at residues methionine 1 to proline 34 is disordered.

Belongs to the ODC antizyme family. In terms of assembly, interacts with ODC1 and thereby sterically blocks ODC homodimerization.

Ornithine decarboxylase (ODC) antizyme protein that negatively regulates ODC activity and intracellular polyamine biosynthesis and uptake in response to increased intracellular polyamine levels. Binds to ODC monomers, inhibiting the assembly of the functional ODC homodimer, and targets the monomers for ubiquitin-independent proteolytic destruction by the 26S proteasome. The protein is Ornithine decarboxylase antizyme of Pristionchus pacificus (Parasitic nematode).